A 114-amino-acid chain; its full sequence is Notch-regulated ankyrin repeat-containing protein (114 aa).

2 ANK repeats span residues 50–79 and 83–112; these read EGQT…DIRL and DGWS…YAAS.

Belongs to the NRARP family. In terms of assembly, interacts with LEF1.

Its function is as follows. Downstream effector of Notch signaling. Involved in the regulation of liver cancer cells self-renewal. Involved in angiogenesis acting downstream of Notch at branch points to regulate vascular density. Proposed to integrate endothelial Notch and Wnt signaling to control stalk cell proliferation and to stablilize new endothelial connections during angiogenesis. During somitogenesis involved in maintenance of proper somite segmentation and proper numbers of somites and vertebrae. Required for proper anterior-posterior somite patterning. Proposed to function in a negative feedback loop to destabilize Notch 1 intracellular domain (NICD) and down-regulate the Notch signal, preventing expansion of the Notch signal into the anterior somite domain. The chain is Notch-regulated ankyrin repeat-containing protein (NRARP) from Homo sapiens (Human).